Reading from the N-terminus, the 224-residue chain is UPF0758 protein VV1_0825 (224 aa).

The tract at residues 1 to 20 (MSLKNLPSESMPREKLLQRG) is disordered. Residues 102-224 (ALTSPQHTKL…VVSFAERGWI (123 aa)) enclose the MPN domain. Zn(2+) is bound by residues His-173, His-175, and Asp-186. A JAMM motif motif is present at residues 173–186 (HNHPSGVAEPSQAD).

The protein belongs to the UPF0758 family.

This Vibrio vulnificus (strain CMCP6) protein is UPF0758 protein VV1_0825.